Here is a 419-residue protein sequence, read N- to C-terminus: Histidine--tRNA ligase (419 aa).

It belongs to the class-II aminoacyl-tRNA synthetase family.

The protein localises to the cytoplasm. It carries out the reaction tRNA(His) + L-histidine + ATP = L-histidyl-tRNA(His) + AMP + diphosphate + H(+). The sequence is that of Histidine--tRNA ligase from Pyrobaculum aerophilum (strain ATCC 51768 / DSM 7523 / JCM 9630 / CIP 104966 / NBRC 100827 / IM2).